The following is a 445-amino-acid chain: Glutamate--tRNA ligase 2 (445 aa).

The short motif at 10 to 20 is the 'HIGH' region element; that stretch reads PSPTGMLHVGN. Positions 240–244 match the 'KMSKS' region motif; that stretch reads KISKR. K243 is an ATP binding site.

The protein belongs to the class-I aminoacyl-tRNA synthetase family. Glutamate--tRNA ligase type 1 subfamily. Monomer.

It localises to the cytoplasm. It catalyses the reaction tRNA(Glu) + L-glutamate + ATP = L-glutamyl-tRNA(Glu) + AMP + diphosphate. Catalyzes the attachment of glutamate to tRNA(Glu) in a two-step reaction: glutamate is first activated by ATP to form Glu-AMP and then transferred to the acceptor end of tRNA(Glu). This chain is Glutamate--tRNA ligase 2, found in Rickettsia canadensis (strain McKiel).